A 172-amino-acid chain; its full sequence is Translation initiation factor IF-3 (172 aa).

The protein belongs to the IF-3 family. Monomer.

The protein localises to the cytoplasm. Its function is as follows. IF-3 binds to the 30S ribosomal subunit and shifts the equilibrium between 70S ribosomes and their 50S and 30S subunits in favor of the free subunits, thus enhancing the availability of 30S subunits on which protein synthesis initiation begins. The polypeptide is Translation initiation factor IF-3 (Thermotoga maritima (strain ATCC 43589 / DSM 3109 / JCM 10099 / NBRC 100826 / MSB8)).